The following is a 51-amino-acid chain: Magnetosome protein Mms5 (51 aa).

Topologically, residues 1-12 are lumenal; that stretch reads MLSAKGVSLGLG. Residues 9-16 are LG region; that stretch reads LGLGLGLG. The helical transmembrane segment at 13 to 33 threads the bilayer; the sequence is LGLGAWGPVLLGVVGVAGAIA. Over 34–51 the chain is Cytoplasmic; sequence LYGYYKNRNAEPAAAEAV.

It belongs to the magnetosome MamD/Mms5 family. Seen in gels as a band of about 5 kDa, with an N-terminus that corresponds to residue 8, suggesting it may undergo N-terminal cleavage.

Its subcellular location is the magnetosome membrane. Functionally, might be involved in magnetite crystal growth. The polypeptide is Magnetosome protein Mms5 (Paramagnetospirillum magneticum (strain ATCC 700264 / AMB-1) (Magnetospirillum magneticum)).